The primary structure comprises 659 residues: tRNA (guanine(26)-N(2))-dimethyltransferase (659 aa).

Residues 1-23 constitute a mitochondrion transit peptide; the sequence is MQGSSLWLSLTFRSARVLSRARF. Positions 55–499 constitute a Trm1 methyltransferase domain; the sequence is TTVTEGAAKI…APASALWDIM (445 aa). S-adenosyl-L-methionine is bound at residue Arg-82. Residue Ser-120 is modified to Phosphoserine. Residues Arg-166 and Asp-184 each coordinate S-adenosyl-L-methionine. Zn(2+)-binding residues include Cys-348, Cys-351, Cys-384, and Cys-387. Residue Ser-517 is modified to Phosphoserine. Disordered regions lie at residues 537 to 578 and 616 to 659; these read EDAN…AMEE and RGDQ…PGID. The Nuclear localization signal signature appears at 543–575; it reads SRQRGLKRFQANPEANWGPRPRARPGGKAADEA. A C3H1-type zinc finger spans residues 600 to 627; it reads RLKTFPCKRFKEGTCQRGDQCCYSHSPP. Ser-625 bears the Phosphoserine mark. Thr-628 and Thr-646 each carry phosphothreonine.

Belongs to the class I-like SAM-binding methyltransferase superfamily. Trm1 family. In terms of processing, (Microbial infection) Cleaved between Gln-530 and Ala-531 by the 3C-like proteinase nsp5 from human coronavirus SARS-CoV-2, leading to its inactivation.

Its subcellular location is the mitochondrion. It is found in the nucleus. It localises to the cytoplasm. The enzyme catalyses guanosine(26) in tRNA + 2 S-adenosyl-L-methionine = N(2)-dimethylguanosine(26) in tRNA + 2 S-adenosyl-L-homocysteine + 2 H(+). Dimethylates a single guanine residue at position 26 of most nuclear- and mitochondrial-encoded tRNAs using S-adenosyl-L-methionine as donor of the methyl groups. tRNA guanine(26)-dimethylation is required for redox homeostasis and ensure proper cellular proliferation and oxidative stress survival. This chain is tRNA (guanine(26)-N(2))-dimethyltransferase, found in Homo sapiens (Human).